Reading from the N-terminus, the 408-residue chain is Elongation factor Tu, chloroplastic (408 aa).

The region spanning 10–214 is the tr-type G domain; sequence KPHVNIGTIG…AVDSYIPTPK (205 aa). The tract at residues 19-26 is G1; that stretch reads GHVDHGKT. Residue 19–26 participates in GTP binding; sequence GHVDHGKT. Thr26 lines the Mg(2+) pocket. The G2 stretch occupies residues 60-64; sequence GITIN. The interval 81 to 84 is G3; the sequence is DCPG. GTP-binding positions include 81-85 and 136-139; these read DCPGH and NKED. The tract at residues 136–139 is G4; sequence NKED. The G5 stretch occupies residues 174-176; sequence SAL.

The protein belongs to the TRAFAC class translation factor GTPase superfamily. Classic translation factor GTPase family. EF-Tu/EF-1A subfamily.

The protein resides in the plastid. It is found in the chloroplast. It catalyses the reaction GTP + H2O = GDP + phosphate + H(+). GTP hydrolase that promotes the GTP-dependent binding of aminoacyl-tRNA to the A-site of ribosomes during protein biosynthesis. The protein is Elongation factor Tu, chloroplastic (tufA) of Chara connivens (Convergent stonewort).